Reading from the N-terminus, the 237-residue chain is Uridylate kinase (237 aa).

Residue 12–15 coordinates ATP; the sequence is KLSG. The tract at residues 20–25 is involved in allosteric activation by GTP; sequence GENGFG. A UMP-binding site is contributed by Gly54. Positions 55 and 59 each coordinate ATP. UMP-binding positions include Asp72 and 133–140; that span reads TGNPYFST. The ATP site is built by Tyr166 and Asp169.

The protein belongs to the UMP kinase family. As to quaternary structure, homohexamer.

The protein localises to the cytoplasm. The enzyme catalyses UMP + ATP = UDP + ADP. The protein operates within pyrimidine metabolism; CTP biosynthesis via de novo pathway; UDP from UMP (UMPK route): step 1/1. Its activity is regulated as follows. Allosterically activated by GTP. Inhibited by UTP. In terms of biological role, catalyzes the reversible phosphorylation of UMP to UDP. This Clostridium perfringens (strain ATCC 13124 / DSM 756 / JCM 1290 / NCIMB 6125 / NCTC 8237 / Type A) protein is Uridylate kinase.